A 129-amino-acid chain; its full sequence is Large ribosomal subunit protein uL22 (129 aa).

The protein belongs to the universal ribosomal protein uL22 family. As to quaternary structure, part of the 50S ribosomal subunit.

Its function is as follows. This protein binds specifically to 23S rRNA; its binding is stimulated by other ribosomal proteins, e.g. L4, L17, and L20. It is important during the early stages of 50S assembly. It makes multiple contacts with different domains of the 23S rRNA in the assembled 50S subunit and ribosome. The globular domain of the protein is located near the polypeptide exit tunnel on the outside of the subunit, while an extended beta-hairpin is found that lines the wall of the exit tunnel in the center of the 70S ribosome. The protein is Large ribosomal subunit protein uL22 of Prochlorococcus marinus (strain MIT 9211).